A 449-amino-acid chain; its full sequence is Glutathione reductase (449 aa).

6 residues coordinate FAD: Ser15, Gly16, Glu35, Thr42, Cys43, and Lys51. Residue Ser15 participates in glutathione binding. Cysteines 43 and 48 form a disulfide. Residue Tyr99 coordinates glutathione. Residue Ala115 participates in FAD binding. Positions 175, 178, 181, 198, 204, and 261 each coordinate NADP(+). FAD-binding residues include Asp302 and Thr310. An NADP(+)-binding site is contributed by Ala340. An FAD-binding site is contributed by His435. His435 serves as the catalytic Proton acceptor.

The protein belongs to the class-I pyridine nucleotide-disulfide oxidoreductase family. Homodimer. FAD serves as cofactor.

Its subcellular location is the cytoplasm. The catalysed reaction is 2 glutathione + NADP(+) = glutathione disulfide + NADPH + H(+). Its pathway is xenobiotic degradation; (2,4,5-trichlorophenoxy)acetate degradation. Functionally, catalyzes the reduction of glutathione disulfide (GSSG) to reduced glutathione (GSH). Constitutes the major mechanism to maintain a high GSH:GSSG ratio in the cytosol. This chain is Glutathione reductase (gor), found in Burkholderia cepacia (Pseudomonas cepacia).